Consider the following 84-residue polypeptide: Subtilisin-chymotrypsin inhibitor WSCI (84 aa).

A signal peptide spans 1-12 (MSSVVKKPLGGN). The interval 1 to 28 (MSSVVKKPLGGNTDTGDHHNQKTEWPEL) is disordered. The span at 15 to 25 (TGDHHNQKTEW) shows a compositional bias: basic and acidic residues.

As to quaternary structure, monomer.

Its subcellular location is the secreted. Its function is as follows. Inhibits B.lichenoformis subtilisin, B.subtilis subtilisin, bovine pancreatic alpha-chymotrypsin and porcine alpha-chymotrypsin with Ki of 3.92 nM, 5.70 nM, 7.24 nM and 9.35 nM respectively. B.lichenoformis subtilisin is inhibited with a molar ratio of 1:0.87. Also inhibits chymotrypsin-like activities from the digestive tracts of the insect larvae T.molitor, P.interpunctella and H.armigera. Does not inhibit bovine pancreatic trypsin, porcine pancreatic elastase, or human leukocyte elastase. The sequence is that of Subtilisin-chymotrypsin inhibitor WSCI from Triticum aestivum (Wheat).